A 548-amino-acid polypeptide reads, in one-letter code: Guanine nucleotide-binding protein-like 3 (548 aa).

The segment covering 1-45 (MKRPKLKKGSKRLSCHKRYKIQKKVREHNRKARKEAKKSGTRKQK) has biased composition (basic residues). The segment at 1 to 118 (MKRPKLKKGS…KKNKGTKAAE (118 aa)) is disordered. Residues 58 to 114 (AEILQEAQRRRQQEEELKQNRKLERQKEVAKRRKLDEKKKKNSEKREKRDNKKNKGT) are a coiled coil. Residues 64–107 (AQRRRQQEEELKQNRKLERQKEVAKRRKLDEKKKKNSEKREKRD) are compositionally biased toward basic and acidic residues. Residues 125-305 (CRHVNKVLEQ…MLDSPALVVS (181 aa)) enclose the CP-type G domain. GTP contacts are provided by residues 172-175 (NKAD), 256-263 (ANVGKSSV), and 298-301 (DSPA). The interval 459 to 548 (RQLVEPEPIE…DAYDFNTDFV (90 aa)) is disordered. Over residues 465-497 (EPIEEELEANDGEEDVEEEHEGSEEEEDEEVEQ) the composition is skewed to acidic residues. A compositionally biased stretch (basic and acidic residues) spans 501–523 (SAKEQEVVSAKEQEVVSAKEQDS). The span at 524 to 534 (KSAGPSVSFDQ) shows a compositional bias: polar residues.

The protein belongs to the TRAFAC class YlqF/YawG GTPase family.

Its subcellular location is the nucleus. The protein localises to the nucleolus. Functionally, may play a role in regulating cellular proliferation. In Xenopus tropicalis (Western clawed frog), this protein is Guanine nucleotide-binding protein-like 3 (gnl3).